We begin with the raw amino-acid sequence, 134 residues long: Methylglyoxal synthase (134 aa).

The region spanning 1–134 (MVNLNIALIA…GLLEWRNAVK (134 aa)) is the MGS-like domain. Substrate-binding positions include histidine 11, lysine 15, and 37–40 (TGAT). Aspartate 63 (proton donor/acceptor) is an active-site residue. Histidine 90 is a binding site for substrate.

This sequence belongs to the methylglyoxal synthase family.

The catalysed reaction is dihydroxyacetone phosphate = methylglyoxal + phosphate. Catalyzes the formation of methylglyoxal from dihydroxyacetone phosphate. The sequence is that of Methylglyoxal synthase from Thermoanaerobacterium thermosaccharolyticum (Clostridium thermosaccharolyticum).